A 670-amino-acid polypeptide reads, in one-letter code: UvrABC system protein B (670 aa).

The region spanning 51–433 (DGLKKGEPFQ…SSRVVEQIIR (383 aa)) is the Helicase ATP-binding domain. 64 to 71 (GVTGSGKT) contacts ATP. The Beta-hairpin signature appears at 117 to 140 (YYDYYQPESYLPAKDQYIEKDAMI). Positions 453-612 (DVMQEIRKIV…IVPTTIRKPI (160 aa)) constitute a Helicase C-terminal domain. A UVR domain is found at 631–666 (PNVIIELDAEMREAADRLDFERAIQVRELIKKLEKE).

It belongs to the UvrB family. As to quaternary structure, forms a heterotetramer with UvrA during the search for lesions. Interacts with UvrC in an incision complex.

It localises to the cytoplasm. Its function is as follows. The UvrABC repair system catalyzes the recognition and processing of DNA lesions. A damage recognition complex composed of 2 UvrA and 2 UvrB subunits scans DNA for abnormalities. Upon binding of the UvrA(2)B(2) complex to a putative damaged site, the DNA wraps around one UvrB monomer. DNA wrap is dependent on ATP binding by UvrB and probably causes local melting of the DNA helix, facilitating insertion of UvrB beta-hairpin between the DNA strands. Then UvrB probes one DNA strand for the presence of a lesion. If a lesion is found the UvrA subunits dissociate and the UvrB-DNA preincision complex is formed. This complex is subsequently bound by UvrC and the second UvrB is released. If no lesion is found, the DNA wraps around the other UvrB subunit that will check the other stand for damage. The chain is UvrABC system protein B from Methanosarcina mazei (strain ATCC BAA-159 / DSM 3647 / Goe1 / Go1 / JCM 11833 / OCM 88) (Methanosarcina frisia).